The sequence spans 845 residues: ATPase morc-1 (845 aa).

ATP contacts are provided by residues Asn-43, 88–90 (SAK), and 97–103 (RYGNGLK). Asn-43 is a binding site for Mg(2+). A coiled-coil region spans residues 284–311 (AAYNKILDEKNETVKKCEEEKALVMSEI). Lys-422 provides a ligand contact to ATP. Disordered stretches follow at residues 566–590 (LPQK…SASS) and 628–739 (KMEP…GKAV). Over residues 574 to 590 (SAPSSSDSQNSIRSASS) the composition is skewed to low complexity. Basic and acidic residues predominate over residues 637 to 646 (HDSHIAEVQR).

Predominantly forms monomers and dimers, but multimerizes to form trimers and tetramers upon DNA binding. Expressed in germline and somatic cells.

The protein resides in the nucleus. Its subcellular location is the nuclear body. It catalyses the reaction ATP + H2O = ADP + phosphate + H(+). Binds non-specifically to DNA and forms static foci which grow by recruiting other morc-1 molecules, and thereby stimulates conformational changes and compaction of DNA, which appears to be enhanced by ATP-binding, but does not require ATP activity. Preferentially binds to long DNAs. Compacts and entraps segments of DNA by sequentially forming loops along the DNA, beginning at the free ends of single- and double-tethered DNA. Does not extrude the DNA loops on compacted double-tethered DNA. Involved in gene silencing. Plays a role in germline RNA interference (RNAi), and in particular, the silencing of endogenous small interfering RNA (endo-siRNA) target genes. May play a role in heterochromatin localization and condensation, and the siRNAi-directed trimethylation of 'Lys-9' of histone H3 in hermaphrodite X chromosomes. Promotes transgenerational epigenetic inheritance and germline immortality. In Caenorhabditis elegans, this protein is ATPase morc-1.